Reading from the N-terminus, the 245-residue chain is Keratin-associated protein 10-12 (245 aa).

Repeat copies occupy residues 36–40 (CCEPP), 41–45 (CCAPA), 62–66 (CCRVT), 84–88 (CCQQS), 94–98 (CCTSS), 104–108 (CCVPV), 109–113 (CCKTV), 114–118 (CCKPV), 119–123 (CCMPV), 124–128 (CCGPS), 131–135 (CCQQS), 141–145 (CCISS), 151–155 (CCVPV), 156–160 (CCKPI), 161–165 (CCVPV), 173–177 (CCQQS), 183–187 (CCTTS), 188–192 (CCRPS), and 214–218 (CCVPT). Residues 36-218 (CCEPPCCAPA…VPVPSCCVPT (183 aa)) form a 19 X 5 AA repeats of C-C-X(3) region.

It belongs to the KRTAP type 10 family. As to quaternary structure, interacts with hair keratins. As to expression, restricted to a narrow region of the hair fiber cuticle, lying approximately 20 cell layers above the apex of the dermal papilla of the hair root; not detected in any other tissues.

Functionally, in the hair cortex, hair keratin intermediate filaments are embedded in an interfilamentous matrix, consisting of hair keratin-associated proteins (KRTAP), which are essential for the formation of a rigid and resistant hair shaft through their extensive disulfide bond cross-linking with abundant cysteine residues of hair keratins. The matrix proteins include the high-sulfur and high-glycine-tyrosine keratins. This is Keratin-associated protein 10-12 (KRTAP10-12) from Homo sapiens (Human).